Reading from the N-terminus, the 560-residue chain is Putative transport protein VFMJ11_0927 (560 aa).

The next 5 membrane-spanning stretches (helical) occupy residues 8-28 (LLSQ…LFIA), 37-57 (LGSS…GYTF), 66-86 (FMLF…GIFL), 94-114 (LLVL…GHYF), and 161-181 (NLSV…ILLA). RCK C-terminal domains are found at residues 203–292 (RGIG…FRNG) and 293–376 (KEVF…KIGF). A run of 5 helical transmembrane segments spans residues 386–406 (LLAF…TMSF), 409–429 (VTFG…LGFL), 451–471 (GLLV…NEYF), 478–498 (VLAA…LVGA), and 539–559 (AGTY…MILL).

It belongs to the AAE transporter (TC 2.A.81) family. YbjL subfamily.

The protein resides in the cell membrane. The chain is Putative transport protein VFMJ11_0927 from Aliivibrio fischeri (strain MJ11) (Vibrio fischeri).